Reading from the N-terminus, the 686-residue chain is Putative xyloglucan glycosyltransferase 10 (686 aa).

A run of 2 helical transmembrane segments spans residues 114–134 (LYAFIRASLLLSVFLLAVELA) and 160–180 (AAYVAPPLQLLADACVVLFLV). D267 is an active-site residue. The substrate site is built by D326 and D328. The active site involves D420. Helical transmembrane passes span 498–518 (LILPFYSFTLFCIILPMTMFI), 523–543 (LPDWVVCYIPALMSFLNILPA), 640–656 (ELALSLLLLTAAARSLL), and 661–681 (IHFYFLMFQGLSFLLVGLDLI).

This sequence belongs to the glycosyltransferase 2 family. Plant cellulose synthase-like C subfamily.

It localises to the golgi apparatus membrane. Probable beta-1,4-glucan synthase rather involved in the synthesis of the xyloglucan backbone than cellulose. Seems to work simultaneously with xyloglucan 6-xylosyltransferase. Xyloglucan is a noncellulosic polysaccharides of plant cell wall and consists of a glucan backbone substituted by xylose, galactose and fucose. The polypeptide is Putative xyloglucan glycosyltransferase 10 (CSLC10) (Oryza sativa subsp. indica (Rice)).